The primary structure comprises 146 residues: Cyanate hydratase (146 aa).

Catalysis depends on residues R87, E90, and S113.

This sequence belongs to the cyanase family.

The enzyme catalyses cyanate + hydrogencarbonate + 3 H(+) = NH4(+) + 2 CO2. Catalyzes the reaction of cyanate with bicarbonate to produce ammonia and carbon dioxide. In Pseudomonas putida (strain ATCC 700007 / DSM 6899 / JCM 31910 / BCRC 17059 / LMG 24140 / F1), this protein is Cyanate hydratase.